The chain runs to 936 residues: Aftiphilin (936 aa).

The segment at M1–E36 is disordered. The segment at M1–E523 is interaction with AP1G1, AP1G2, GGA1 and GGA3. A compositionally biased stretch (acidic residues) spans G19–G29. The short motif at F28–F31 is the WXXF motif 1 element. The residue at position 151 (S151) is a Phosphoserine. 2 disordered regions span residues T197 to S216 and K374 to S409. The span at K374–K389 shows a compositional bias: basic and acidic residues. Residues E386–E610 are interaction with AP1G1. At S395 the chain carries Phosphoserine. The short motif at F432–F435 is the WXXF motif 2 element. Residues G436–F438 carry the WXXF motif 3 (partial) motif. Positions F478–F481 match the WXXF motif 4 motif. S518 carries the post-translational modification Phosphoserine. Positions G589 to L637 are disordered. Positions E595–E610 are enriched in basic and acidic residues. Position 617 is a phosphothreonine (T617). The span at T617–S628 shows a compositional bias: polar residues. Positions Y716–W718 match the CLTCL1/Clathrin-binding motif. Positions L825–D829 are clathrin-binding.

Self-associates. Interacts with GGA1 (via GAE domain). Interacts with GGA3 (via GAE domain), AP1G1 (via GAE domain) and AP1G2 (via GAE domain). Component of the aftiphilin/p200/gamma-synergin complex, at least composed of AFTPH/aftiphilin, HEATR5B/p200a and SYNRG/gamma-synergin, which plays a role in the AP1G1/AP-1-mediated protein trafficking from early to recycling endosomes. Within the complex interacts with HEATR5B/p200a and SYNRG/gamma-synergin; the interactions are direct. Interacts with AP1G1/AP-1; the interaction is required to recruit AFTPH/aftiphilin to the perinuclear region of the cell. Interacts with CLTCL1/Clathrin.

Its subcellular location is the cytoplasm. The protein resides in the perinuclear region. It is found in the cytoplasmic vesicle. It localises to the clathrin-coated vesicle. Component of clathrin-coated vesicles. Component of the aftiphilin/p200/gamma-synergin complex, which plays roles in AP1G1/AP-1-mediated protein trafficking including the trafficking of transferrin from early to recycling endosomes, and the membrane trafficking of furin and the lysosomal enzyme cathepsin D between the trans-Golgi network (TGN) and endosomes. In Homo sapiens (Human), this protein is Aftiphilin (AFTPH).